The sequence spans 494 residues: tRNA-2-methylthio-N(6)-dimethylallyladenosine synthase (494 aa).

The MTTase N-terminal domain occupies 4–120; sequence RSYQVRTFGC…LPVLLERARH (117 aa). [4Fe-4S] cluster contacts are provided by Cys-13, Cys-49, Cys-83, Cys-157, Cys-161, and Cys-164. The region spanning 143–374 is the Radical SAM core domain; the sequence is RASHHSAWVS…SLQDEMSWAE (232 aa). The TRAM domain occupies 376–449; that stretch reads RAQVGRRVEI…PHHLTADGPL (74 aa). Residues 465–494 form a disordered region; the sequence is RAIAGDTPRPDRPAVSLGMPQLRPSAPAAR.

It belongs to the methylthiotransferase family. MiaB subfamily. In terms of assembly, monomer. The cofactor is [4Fe-4S] cluster.

The protein localises to the cytoplasm. It catalyses the reaction N(6)-dimethylallyladenosine(37) in tRNA + (sulfur carrier)-SH + AH2 + 2 S-adenosyl-L-methionine = 2-methylsulfanyl-N(6)-dimethylallyladenosine(37) in tRNA + (sulfur carrier)-H + 5'-deoxyadenosine + L-methionine + A + S-adenosyl-L-homocysteine + 2 H(+). Functionally, catalyzes the methylthiolation of N6-(dimethylallyl)adenosine (i(6)A), leading to the formation of 2-methylthio-N6-(dimethylallyl)adenosine (ms(2)i(6)A) at position 37 in tRNAs that read codons beginning with uridine. This chain is tRNA-2-methylthio-N(6)-dimethylallyladenosine synthase, found in Parafrankia sp. (strain EAN1pec).